The sequence spans 89 residues: Small ribosomal subunit protein uS14A (89 aa).

This sequence belongs to the universal ribosomal protein uS14 family. As to quaternary structure, part of the 30S ribosomal subunit. Contacts proteins S3 and S10.

Binds 16S rRNA, required for the assembly of 30S particles and may also be responsible for determining the conformation of the 16S rRNA at the A site. The chain is Small ribosomal subunit protein uS14A from Oceanobacillus iheyensis (strain DSM 14371 / CIP 107618 / JCM 11309 / KCTC 3954 / HTE831).